A 388-amino-acid chain; its full sequence is Chorismate synthase (388 aa).

Residues arginine 39 and arginine 45 each contribute to the NADP(+) site. Residues 130 to 132 (RSS), 251 to 252 (NA), glycine 296, 311 to 315 (KPIPT), and arginine 337 each bind FMN.

This sequence belongs to the chorismate synthase family. In terms of assembly, homotetramer. The cofactor is FMNH2.

The enzyme catalyses 5-O-(1-carboxyvinyl)-3-phosphoshikimate = chorismate + phosphate. It participates in metabolic intermediate biosynthesis; chorismate biosynthesis; chorismate from D-erythrose 4-phosphate and phosphoenolpyruvate: step 7/7. Catalyzes the anti-1,4-elimination of the C-3 phosphate and the C-6 proR hydrogen from 5-enolpyruvylshikimate-3-phosphate (EPSP) to yield chorismate, which is the branch point compound that serves as the starting substrate for the three terminal pathways of aromatic amino acid biosynthesis. This reaction introduces a second double bond into the aromatic ring system. In Streptococcus pyogenes serotype M49 (strain NZ131), this protein is Chorismate synthase.